We begin with the raw amino-acid sequence, 292 residues long: Small ribosomal subunit biogenesis GTPase RsgA (292 aa).

A CP-type G domain is found at 65 to 223; the sequence is KTELIRPTVA…VVDTPGFSSL (159 aa). Residues 114–117 and 165–173 each bind GTP; these read NKLD and GPSGVGKST. Residues Cys-247, Cys-252, His-254, and Cys-260 each contribute to the Zn(2+) site.

It belongs to the TRAFAC class YlqF/YawG GTPase family. RsgA subfamily. As to quaternary structure, monomer. Associates with 30S ribosomal subunit, binds 16S rRNA. Zn(2+) is required as a cofactor.

The protein resides in the cytoplasm. Its function is as follows. One of several proteins that assist in the late maturation steps of the functional core of the 30S ribosomal subunit. Helps release RbfA from mature subunits. May play a role in the assembly of ribosomal proteins into the subunit. Circularly permuted GTPase that catalyzes slow GTP hydrolysis, GTPase activity is stimulated by the 30S ribosomal subunit. The sequence is that of Small ribosomal subunit biogenesis GTPase RsgA from Alkaliphilus metalliredigens (strain QYMF).